The primary structure comprises 1243 residues: Inositol hexakisphosphate and diphosphoinositol-pentakisphosphate kinase 2 (1243 aa).

Position 38 is a phosphoserine (serine 38). 53-54 (KK) serves as a coordination point for substrate. The ATP site is built by arginine 134, lysine 187, histidine 194, and arginine 213. A substrate-binding site is contributed by 213–214 (RK). Serine 223 is modified (phosphoserine). Residues 237-240 (EEFM) and 246-248 (DVK) each bind ATP. 2 residues coordinate substrate: lysine 248 and arginine 262. ATP is bound by residues serine 264, aspartate 309, and 321-323 (DVN). 326–329 (SFVK) is a substrate binding site. The tract at residues 371 to 442 (PTTSGTMMEL…VLDIARQLLM (72 aa)) is polyphosphoinositide-binding domain. 2 disordered regions span residues 898-941 (KGCE…RDEV) and 957-1016 (HIHR…SPVS). The segment covering 915–941 (ASRENEGRRPFKIDNDDEPHTSKRDEV) has biased composition (basic and acidic residues). A compositionally biased stretch (basic residues) spans 958–969 (IHRKSPLPRSRK). A phosphoserine mark is found at serine 1006, serine 1016, serine 1074, serine 1091, serine 1165, serine 1172, and serine 1180. Residues 1185 to 1243 (TPAKILPTPPATLKSTKASSKPATSGPSSAVVPNTSSRKKNITSKTETHEHKKNTGKKK) are disordered. Positions 1195 to 1209 (ATLKSTKASSKPATS) are enriched in low complexity. A compositionally biased stretch (polar residues) spans 1210 to 1220 (GPSSAVVPNTS). Phosphoserine is present on residues serine 1220 and serine 1221.

This sequence belongs to the histidine acid phosphatase family. VIP1 subfamily.

It is found in the cytoplasm. It localises to the cytosol. The catalysed reaction is 1D-myo-inositol hexakisphosphate + ATP = 1-diphospho-1D-myo-inositol 2,3,4,5,6-pentakisphosphate + ADP. The enzyme catalyses 5-diphospho-1D-myo-inositol 1,2,3,4,6-pentakisphosphate + ATP + H(+) = 1,5-bis(diphospho)-1D-myo-inositol 2,3,4,6-tetrakisphosphate + ADP. Functionally, bifunctional inositol kinase that acts in concert with the IP6K kinases IP6K1, IP6K2 and IP6K3 to synthesize the diphosphate group-containing inositol pyrophosphates diphosphoinositol pentakisphosphate, PP-InsP5, and bis-diphosphoinositol tetrakisphosphate, (PP)2-InsP4. PP-InsP5 and (PP)2-InsP4, also respectively called InsP7 and InsP8, regulate a variety of cellular processes, including apoptosis, vesicle trafficking, cytoskeletal dynamics, exocytosis, insulin signaling and neutrophil activation. Phosphorylates inositol hexakisphosphate (InsP6) at position 1 to produce PP-InsP5 which is in turn phosphorylated by IP6Ks to produce (PP)2-InsP4. Alternatively, phosphorylates PP-InsP5 at position 1, produced by IP6Ks from InsP6, to produce (PP)2-InsP4. Required for normal hearing. The sequence is that of Inositol hexakisphosphate and diphosphoinositol-pentakisphosphate kinase 2 from Homo sapiens (Human).